The following is a 363-amino-acid chain: Flagellar P-ring protein 2 (363 aa).

An N-terminal signal peptide occupies residues 1–20 (MKLRTCCISLMLLLALPLQA).

The protein belongs to the FlgI family. In terms of assembly, the basal body constitutes a major portion of the flagellar organelle and consists of four rings (L,P,S, and M) mounted on a central rod.

The protein resides in the periplasm. It is found in the bacterial flagellum basal body. Functionally, assembles around the rod to form the L-ring and probably protects the motor/basal body from shearing forces during rotation. This is Flagellar P-ring protein 2 from Photobacterium profundum (strain SS9).